Here is a 135-residue protein sequence, read N- to C-terminus: MNSCKRFPRSARICLRSEYYVAFEQGRRYSSVLLRLHHLPTSGPVRLGLVVSRRVDIRAVNRNRIKRALREVMRQIAYKLVPGDYVVVVRQTAKDVSNAELSVALLSLLRRIGALPLAPIDNAMLPFFERNCSRK.

Belongs to the RnpA family. In terms of assembly, consists of a catalytic RNA component (M1 or rnpB) and a protein subunit.

The enzyme catalyses Endonucleolytic cleavage of RNA, removing 5'-extranucleotides from tRNA precursor.. Functionally, RNaseP catalyzes the removal of the 5'-leader sequence from pre-tRNA to produce the mature 5'-terminus. It can also cleave other RNA substrates such as 4.5S RNA. The protein component plays an auxiliary but essential role in vivo by binding to the 5'-leader sequence and broadening the substrate specificity of the ribozyme. This Xylella fastidiosa (strain 9a5c) protein is Ribonuclease P protein component.